The primary structure comprises 1487 residues: Secretory phospholipase A2 receptor (1487 aa).

Residues 1–26 (MVQWLAMLQLLWLQQLLLLGIHQGIA) form the signal peptide. The Extracellular portion of the chain corresponds to 27–1396 (QDLTHIQEPS…AQPEKGLSHS (1370 aa)). The 124-residue stretch at 42–165 (KGIFIIQSES…SSGGDICEHP (124 aa)) folds into the Ricin B-type lectin domain. Intrachain disulfides connect C55-C68, C93-C110, C181-C207, and C195-C222. An N-linked (GlcNAc...) asparagine glycan is attached at N97. The 49-residue stretch at 176-224 (AHGMPCVFPFQFKGHWHHDCIREGQKEHLLWCATTSRYEEDEKWGFCPD) folds into the Fibronectin type-II domain. An N-linked (GlcNAc...) asparagine glycan is attached at N239. 6 consecutive C-type lectin domains span residues 241–357 (SSRI…YICK), 387–504 (FNRK…YICK), 524–643 (HGRF…MSLC), 673–797 (GLAS…WICR), 819–938 (YQNA…SICK), and 964–1095 (FNYK…GFVC). Cystine bridges form between C263–C356, C333–C348, C408–C503, C480–C495, C617–C634, C699–C796, C774–C788, C840–C937, C914–C929, and C1066–C1086. N928 is a glycosylation site (N-linked (GlcNAc...) asparagine). Residues N1107, N1122, and N1131 are each glycosylated (N-linked (GlcNAc...) asparagine). 2 consecutive C-type lectin domains span residues 1120-1231 (YGNR…GAIC) and 1256-1377 (FKGN…FICK). Disulfide bonds link C1208-C1222, C1279-C1376, and C1353-C1368. The chain crosses the membrane as a helical span at residues 1397–1417 (IVPVTVTLTLIIALGIFMLCF). Residues 1418-1487 (WIYKQKSDIF…HKGRPICISP (70 aa)) lie on the Cytoplasmic side of the membrane. Residues 1435-1441 (GSYYPTL) carry the Endocytosis signal motif. The segment covering 1463 to 1475 (DEEVRDAPATESK) has biased composition (basic and acidic residues). Positions 1463–1487 (DEEVRDAPATESKRGHKGRPICISP) are disordered.

As to quaternary structure, interacts with sPLA2-IB/PLA2G1B; this interaction mediates intracellular signaling as well as clearance of extracellular sPLA2-IB/PLA2G1B via endocytotic pathway. Interacts with sPLA2-X/PLA2G10; this interaction mediates sPLA2-X/PLA2G10 clearance and inactivation. In terms of processing, the secretory phospholipase A2 receptor form may be produced by the action of metalloproteinases. It contains all extracellular domains and only lacks transmembrane and cytosolic regions. It is however unclear whether this form is produced by proteolytic cleavage as suggested by some experiments reported by PubMed:11830583, or by alternative splicing. In terms of tissue distribution, widely expressed. Present in type II alveolar epithelial cells and a subset of splenic lymphocytes. Present at the surface of polymorphonuclear neutrophils (at protein level).

Its subcellular location is the cell membrane. It localises to the secreted. Its function is as follows. Receptor for secretory phospholipase A2 (sPLA2). Acts as a receptor for phospholipases sPLA2-IB/PLA2G1B, sPLA2-X/PLA2G10 and, with lower affinity, sPLA2-IIA/PLA2G2A. Also able to bind to snake PA2-like toxins. Although its precise function remains unclear, binding of sPLA2 to its receptor participates in both positive and negative regulation of sPLA2 functions as well as clearance of sPLA2. Binding of sPLA2-IB/PLA2G1B induces various effects depending on the cell type, such as activation of the mitogen-activated protein kinase (MAPK) cascade to induce cell proliferation, the production of lipid mediators, selective release of arachidonic acid in bone marrow-derived mast cells. In neutrophils, binding of sPLA2-IB/PLA2G1B can activate p38 MAPK to stimulate elastase release and cell adhesion. May be involved in responses in pro-inflammatory cytokine productions during endotoxic shock. Also has endocytic properties and rapidly internalizes sPLA2 ligands, which is particularly important for the clearance of extracellular sPLA2s to protect their potent enzymatic activities. The soluble secretory phospholipase A2 receptor form is circulating and acts as a negative regulator of sPLA2 functions by blocking the biological functions of sPLA2-IB/PLA2G1B and sPLA2-X/PLA2G10. In podocytes, binding of sPLA2-IB/PLA2G1B can regulate podocyte survival and glomerular homeostasis. This chain is Secretory phospholipase A2 receptor (Pla2r1), found in Mus musculus (Mouse).